The following is a 567-amino-acid chain: Multidrug transporter TPO1_1 (567 aa).

The tract at residues Met1 to Gly71 is disordered. The N-linked (GlcNAc...) asparagine glycan is linked to Asn120. The next 12 helical transmembrane spans lie at Ile128–Ala148, Ile157–Ala177, Gly194–Lys214, Phe224–Met244, Ala253–Ser273, Trp283–Phe303, Pro358–Leu378, Glu396–Phe416, Leu436–Thr456, Ala471–Ile491, Ala498–Ala520, and Trp531–Leu551.

This sequence belongs to the major facilitator superfamily. DHA1 family. Polyamines/proton antiporter (TC 2.A.1.2.16) subfamily.

The protein resides in the cell membrane. Its function is as follows. Multidrug resistance transporter involved in resistance to azole antifungal drugs such as the imidazoles miconazole, ketoconazole, and tioconazole; as well as the triazoles itraconazole and fluconazole. Also plays a role in the resistance to other antifungal drug families such as the polyene amphotericin B, the pyrimide analog flucytosine, the fungicide mancozeb, and the polyamine spermine. Decreases the intracellular accumulation of clotrimazole by mediating its extrusion from cells. Involved in virulence by conferring resistance to the human antimicrobial peptide histatin-5. In Candida glabrata (strain ATCC 2001 / BCRC 20586 / JCM 3761 / NBRC 0622 / NRRL Y-65 / CBS 138) (Yeast), this protein is Multidrug transporter TPO1_1.